Consider the following 699-residue polypeptide: Elongation factor G (699 aa).

In terms of domain architecture, tr-type G spans 8–283 (EHIRNIGICA…AIVDFLPSPI (276 aa)). Residues 17-24 (AHIDAGKT), 81-85 (DTPGH), and 135-138 (NKMD) contribute to the GTP site.

It belongs to the TRAFAC class translation factor GTPase superfamily. Classic translation factor GTPase family. EF-G/EF-2 subfamily.

It localises to the cytoplasm. Catalyzes the GTP-dependent ribosomal translocation step during translation elongation. During this step, the ribosome changes from the pre-translocational (PRE) to the post-translocational (POST) state as the newly formed A-site-bound peptidyl-tRNA and P-site-bound deacylated tRNA move to the P and E sites, respectively. Catalyzes the coordinated movement of the two tRNA molecules, the mRNA and conformational changes in the ribosome. This is Elongation factor G from Rickettsia typhi (strain ATCC VR-144 / Wilmington).